We begin with the raw amino-acid sequence, 302 residues long: Nudix hydrolase 22, chloroplastic (302 aa).

The transit peptide at 1–25 (MKSGASAASPTAKSFNFGSSRLLAL) directs the protein to the chloroplast. Positions 73-229 (PKKAAVLICL…DSDYVIWGLT (157 aa)) constitute a Nudix hydrolase domain. Residues 114–135 (KAEEHDKDDGITATREAEEEIG) carry the Nudix box motif. Mg(2+) is bound by residues glutamate 129 and glutamate 133.

The protein belongs to the Nudix hydrolase family. The cofactor is Mg(2+). Mn(2+) is required as a cofactor. As to expression, expressed in roots, leaves, stems and inflorescences.

It localises to the plastid. The protein localises to the chloroplast. In terms of biological role, probably mediates the hydrolysis of some nucleoside diphosphate derivatives. This chain is Nudix hydrolase 22, chloroplastic (NUDT22), found in Arabidopsis thaliana (Mouse-ear cress).